A 644-amino-acid polypeptide reads, in one-letter code: 1,4-alpha-glucan branching enzyme GlgB (644 aa).

Asp-309 serves as the catalytic Nucleophile. Glu-362 serves as the catalytic Proton donor.

The protein belongs to the glycosyl hydrolase 13 family. GlgB subfamily. In terms of assembly, monomer.

It carries out the reaction Transfers a segment of a (1-&gt;4)-alpha-D-glucan chain to a primary hydroxy group in a similar glucan chain.. Its pathway is glycan biosynthesis; glycogen biosynthesis. Its function is as follows. Catalyzes the formation of the alpha-1,6-glucosidic linkages in glycogen by scission of a 1,4-alpha-linked oligosaccharide from growing alpha-1,4-glucan chains and the subsequent attachment of the oligosaccharide to the alpha-1,6 position. The protein is 1,4-alpha-glucan branching enzyme GlgB of Cutibacterium acnes (strain DSM 16379 / KPA171202) (Propionibacterium acnes).